A 496-amino-acid chain; its full sequence is Fascin (496 aa).

It belongs to the fascin family.

Its subcellular location is the cytoplasm. The protein localises to the cytoskeleton. Acts as an actin bundling protein. This chain is Fascin, found in Strongylocentrotus purpuratus (Purple sea urchin).